The primary structure comprises 146 residues: Protein MGF 100-3L (146 aa).

Belongs to the asfivirus MGF 100 family.

Its function is as follows. Plays a role in virus cell tropism, and may be required for efficient virus replication in macrophages. The polypeptide is Protein MGF 100-3L (Ornithodoros (relapsing fever ticks)).